The sequence spans 54 residues: Small ribosomal subunit protein uS14 (54 aa).

4 residues coordinate Zn(2+): C19, C22, C37, and C40.

It belongs to the universal ribosomal protein uS14 family. Zinc-binding uS14 subfamily. Part of the 30S ribosomal subunit. Zn(2+) is required as a cofactor.

Functionally, binds 16S rRNA, required for the assembly of 30S particles. This chain is Small ribosomal subunit protein uS14, found in Pyrobaculum aerophilum (strain ATCC 51768 / DSM 7523 / JCM 9630 / CIP 104966 / NBRC 100827 / IM2).